We begin with the raw amino-acid sequence, 364 residues long: 3'(2'),5'-bisphosphate nucleotidase 1 (364 aa).

Asp54 acts as the Proton acceptor in catalysis. Residues Glu77, Asp141, Ile143, and Asp144 each contribute to the Mg(2+) site. The active-site Proton acceptor is the Thr146. Thr146, His243, Ser272, Lys275, Arg289, and Asp302 together coordinate adenosine 3',5'-bisphosphate. Residues His243, Ser272, Lys275, Arg289, and Asp302 each coordinate AMP. Asp302 serves as a coordination point for Mg(2+).

The protein belongs to the inositol monophosphatase superfamily. Mg(2+) serves as cofactor.

The enzyme catalyses 3'-phosphoadenylyl sulfate + H2O = adenosine 5'-phosphosulfate + phosphate. The catalysed reaction is adenosine 3',5'-bisphosphate + H2O = AMP + phosphate. It catalyses the reaction adenosine 2',5'-bisphosphate + H2O = AMP + phosphate. Phosphatase that converts adenosine 3'-phosphate 5'-phosphosulfate (PAPS) to adenosine 5'-phosphosulfate (APS) and 3'(2')-phosphoadenosine 5'-phosphate (PAP) to AMP. Regulates the flux of sulfur in the sulfur-activation pathway by converting PAPS to APS. Involved in salt tolerance. The protein is 3'(2'),5'-bisphosphate nucleotidase 1 (HAL21) of Candida albicans (strain WO-1) (Yeast).